The sequence spans 173 residues: uncharacterized protein (173 aa).

This sequence belongs to the ycf73 family.

Its subcellular location is the plastid. It localises to the chloroplast. This is an uncharacterized protein from Saccharum hybrid (Sugarcane).